Consider the following 231-residue polypeptide: Small ribosomal subunit protein bS18c (231 aa).

Disordered regions lie at residues 1-31 (MEKS…PIES) and 95-231 (QKEE…TRKK). The span at 9 to 26 (IKKKRPFRKKKRSFRKRR) shows a compositional bias: basic residues. Composition is skewed to basic and acidic residues over residues 95 to 151 (QKEE…EFQR), 159 to 169 (TNEKQTNEKQT), and 212 to 231 (TNEK…TRKK).

Belongs to the bacterial ribosomal protein bS18 family. In terms of assembly, part of the 30S ribosomal subunit.

The protein localises to the plastid. Its subcellular location is the chloroplast. This chain is Small ribosomal subunit protein bS18c, found in Jasminum nudiflorum (Winter jasmine).